Here is a 156-residue protein sequence, read N- to C-terminus: MRRRKAPVREVLPDPIYGNKVITKFINSLMYDGKKSVATEIMYGALKAIEKKGGDVKGIDVFNDAIENVKPILEVKSRRVGGATYQVPVEVRPVRQQALAIRWLITYARKRSERTMIDKLANELLDAANSKGASFKKKEDTYKMAEANKAFAHYRW.

It belongs to the universal ribosomal protein uS7 family. In terms of assembly, part of the 30S ribosomal subunit. Contacts proteins S9 and S11.

In terms of biological role, one of the primary rRNA binding proteins, it binds directly to 16S rRNA where it nucleates assembly of the head domain of the 30S subunit. Is located at the subunit interface close to the decoding center, probably blocks exit of the E-site tRNA. The chain is Small ribosomal subunit protein uS7 from Campylobacter curvus (strain 525.92).